The primary structure comprises 385 residues: Carbamoyl phosphate synthase small chain (385 aa).

The CPSase stretch occupies residues 1–185 (MSEPAILVLA…LGKGFIEQTQ (185 aa)). L-glutamine contacts are provided by S47, G237, and G239. One can recognise a Glutamine amidotransferase type-1 domain in the interval 189–376 (NVVAYDFGVK…INEMRKANLS (188 aa)). Catalysis depends on C265, which acts as the Nucleophile. Residues L266, Q269, N307, G309, and F310 each coordinate L-glutamine. Active-site residues include H349 and E351.

The protein belongs to the CarA family. As to quaternary structure, composed of two chains; the small (or glutamine) chain promotes the hydrolysis of glutamine to ammonia, which is used by the large (or ammonia) chain to synthesize carbamoyl phosphate. Tetramer of heterodimers (alpha,beta)4.

It carries out the reaction hydrogencarbonate + L-glutamine + 2 ATP + H2O = carbamoyl phosphate + L-glutamate + 2 ADP + phosphate + 2 H(+). The catalysed reaction is L-glutamine + H2O = L-glutamate + NH4(+). Its pathway is amino-acid biosynthesis; L-arginine biosynthesis; carbamoyl phosphate from bicarbonate: step 1/1. It participates in pyrimidine metabolism; UMP biosynthesis via de novo pathway; (S)-dihydroorotate from bicarbonate: step 1/3. Small subunit of the glutamine-dependent carbamoyl phosphate synthetase (CPSase). CPSase catalyzes the formation of carbamoyl phosphate from the ammonia moiety of glutamine, carbonate, and phosphate donated by ATP, constituting the first step of 2 biosynthetic pathways, one leading to arginine and/or urea and the other to pyrimidine nucleotides. The small subunit (glutamine amidotransferase) binds and cleaves glutamine to supply the large subunit with the substrate ammonia. The sequence is that of Carbamoyl phosphate synthase small chain from Pasteurella multocida (strain Pm70).